Consider the following 336-residue polypeptide: Phosphate acyltransferase (336 aa).

Belongs to the PlsX family. In terms of assembly, homodimer. Probably interacts with PlsY.

It localises to the cytoplasm. The enzyme catalyses a fatty acyl-[ACP] + phosphate = an acyl phosphate + holo-[ACP]. Its pathway is lipid metabolism; phospholipid metabolism. Catalyzes the reversible formation of acyl-phosphate (acyl-PO(4)) from acyl-[acyl-carrier-protein] (acyl-ACP). This enzyme utilizes acyl-ACP as fatty acyl donor, but not acyl-CoA. The sequence is that of Phosphate acyltransferase from Pseudomonas fluorescens (strain ATCC BAA-477 / NRRL B-23932 / Pf-5).